We begin with the raw amino-acid sequence, 347 residues long: MNFPCIYHVYSIRKIMFLVIVACLPGIFAKYYFFGIGTLIQIFFSIFISLVLEIIILKIRSKNIKNYLQDTSLVLTSVLFGVSIPPLLPWWMTSIGLFFAIVVAKHLYGGIGQNIFNPAMVGYAVLLISFPVYMNNWNERDFSLSFFNDFKKSAYIIFFKNDITTVSSSYLNIIPDAFTTATPLNNFKIKSHLKDDFFLKENIIKNKEVSIQTSWKCINISFFLGGIFLLFTKIICWRIPISFLSSLGMLSIITYFYSKELFMSPQVHFFSGGTMICAFFIATDPVTAACNNVGKIVFGIIIGFLVWIIRNYSDYPDAIAFSVLFANMTVPLVDYYTKSSGYGRNNI.

Helical transmembrane passes span 15–35 (IMFL…YFFG), 36–56 (IGTL…EIII), 84–104 (IPPL…IVVA), and 114–134 (NIFN…PVYM). Position 182 is an FMN phosphoryl threonine (Thr-182). 5 helical membrane-spanning segments follow: residues 217 to 237 (CINI…IICW), 239 to 259 (IPIS…FYSK), 261 to 281 (LFMS…AFFI), 289 to 309 (ACNN…VWII), and 315 to 335 (YPDA…LVDY).

Belongs to the NqrB/RnfD family. The complex is composed of six subunits: RnfA, RnfB, RnfC, RnfD, RnfE and RnfG. The cofactor is FMN.

It localises to the cell inner membrane. Its function is as follows. Part of a membrane-bound complex that couples electron transfer with translocation of ions across the membrane. The polypeptide is Ion-translocating oxidoreductase complex subunit D (Buchnera aphidicola subsp. Acyrthosiphon pisum (strain 5A)).